Here is a 144-residue protein sequence, read N- to C-terminus: UPF0292 protein MA_4098 (144 aa).

Positions 28 to 109 constitute a Toprim domain; it reads GAVIIVEGKR…KPELQIRNKL (82 aa). Mg(2+) is bound by residues E34, D78, and D80.

This sequence belongs to the UPF0292 family. Requires Mg(2+) as cofactor.

This is UPF0292 protein MA_4098 from Methanosarcina acetivorans (strain ATCC 35395 / DSM 2834 / JCM 12185 / C2A).